A 478-amino-acid polypeptide reads, in one-letter code: Melanopsin (478 aa).

The segment covering 1-14 has biased composition (pro residues); the sequence is MNPPSGPRVPPSPT. The tract at residues 1-32 is disordered; it reads MNPPSGPRVPPSPTQEPSCMATPAPPSWWDSS. At 1-72 the chain is on the extracellular side; it reads MNPPSGPRVP…VDVPDHAHYT (72 aa). Residues 73-93 traverse the membrane as a helical segment; it reads LGTVILLVGLTGMLGNLTVIY. Over 94–107 the chain is Cytoplasmic; that stretch reads TFCRSRSLRTPANM. A helical membrane pass occupies residues 108 to 128; the sequence is FIINLAVSDFLMSFTQAPVFF. Residues 129–144 are Extracellular-facing; it reads TSSLYKQWLFGETGCE. A disulfide bridge links cysteine 143 with cysteine 221. Residues 145–165 form a helical membrane-spanning segment; the sequence is FYAFCGALFGISSMITLTAIA. The Cytoplasmic segment spans residues 166-188; the sequence is LDRYLVITRPLATFGVASKRRAA. Residues 189 to 209 form a helical membrane-spanning segment; it reads FVLLGVWLYALAWSLPPFFGW. Over 210–238 the chain is Extracellular; it reads SAYVPEGLLTSCSWDYMSFTPAVRAYTML. The helical transmembrane segment at 239–259 threads the bilayer; it reads LCCFVFFLPLLIIIYCYIFIF. At 260 to 296 the chain is on the cytoplasmic side; the sequence is RAIRETGRALQTFGACKGNGESLWQRQRLQSECKMAK. The helical transmembrane segment at 297-317 threads the bilayer; sequence IMLLVILLFVLSWAPYSAVAL. Residues 318–332 lie on the Extracellular side of the membrane; it reads VAFAGYAHVLTPYMS. The helical transmembrane segment at 333-353 threads the bilayer; sequence SVPAVIAKASAIHNPIIYAIT. Lysine 340 carries the N6-(retinylidene)lysine modification. Residues 354 to 478 lie on the Cytoplasmic side of the membrane; that stretch reads HPKYRVAIAQ…GLIPSQDPRM (125 aa). A disordered region spans residues 440–478; the sequence is LYGQGLEDLEAKAPPRPQGHEAETPGKTKGLIPSQDPRM. Residues 448 to 465 show a composition bias toward basic and acidic residues; the sequence is LEAKAPPRPQGHEAETPG.

Belongs to the G-protein coupled receptor 1 family. Opsin subfamily. In terms of tissue distribution, expressed in the retina.

It is found in the cell membrane. It localises to the cell projection. The protein resides in the axon. The protein localises to the dendrite. Its subcellular location is the perikaryon. In terms of biological role, photoreceptor that binds cis-retinaldehydes. Contributes to pupillar reflex, photoentrainment and other non-image forming responses to light. May be involved in the optokinetic visual tracking response. May be involved in the regulation of retinal hyaloid vessel growth and regression. This chain is Melanopsin (OPN4), found in Homo sapiens (Human).